The chain runs to 155 residues: Ribosomal RNA large subunit methyltransferase H (155 aa).

Residues Leu-72, Gly-103, and Leu-122–Leu-127 contribute to the S-adenosyl-L-methionine site.

The protein belongs to the RNA methyltransferase RlmH family. As to quaternary structure, homodimer.

The protein localises to the cytoplasm. It carries out the reaction pseudouridine(1915) in 23S rRNA + S-adenosyl-L-methionine = N(3)-methylpseudouridine(1915) in 23S rRNA + S-adenosyl-L-homocysteine + H(+). Functionally, specifically methylates the pseudouridine at position 1915 (m3Psi1915) in 23S rRNA. The sequence is that of Ribosomal RNA large subunit methyltransferase H from Actinobacillus pleuropneumoniae serotype 5b (strain L20).